We begin with the raw amino-acid sequence, 998 residues long: Mediator of RNA polymerase II transcription subunit 14 (998 aa).

It belongs to the Mediator complex subunit 14 family. In terms of assembly, component of the Mediator complex.

Its subcellular location is the nucleus. Its function is as follows. Component of the Mediator complex, a coactivator involved in the regulated transcription of nearly all RNA polymerase II-dependent genes. Mediator functions as a bridge to convey information from gene-specific regulatory proteins to the basal RNA polymerase II transcription machinery. Mediator is recruited to promoters by direct interactions with regulatory proteins and serves as a scaffold for the assembly of a functional preinitiation complex with RNA polymerase II and the general transcription factors. This chain is Mediator of RNA polymerase II transcription subunit 14 (RGR1), found in Kluyveromyces lactis (strain ATCC 8585 / CBS 2359 / DSM 70799 / NBRC 1267 / NRRL Y-1140 / WM37) (Yeast).